We begin with the raw amino-acid sequence, 535 residues long: Beta-amylase (535 aa).

Positions 1-2 are cleaved as a propeptide — removed in mature form; it reads ME. Val3 carries the post-translational modification N-acetylvaline. Asp51, His91, and Asp99 together coordinate substrate. Catalysis depends on Glu184, which acts as the Proton donor. Residues Lys293, His298, and Thr340 each contribute to the substrate site. Glu378 acts as the Proton acceptor in catalysis. Substrate-binding positions include 379 to 380 and Arg418; that span reads NA. Tandem repeats lie at residues 489 to 499, 500 to 510, and 511 to 521. Positions 489 to 532 are 4 X 11 AA tandem repeats; it reads GPTGGMGGQAEGPTCGMGGQVKGPTGGMGGQAEDPTSGMGGELP. The propeptide at 490–535 is removed in mature form; the sequence is PTGGMGGQAEGPTCGMGGQVKGPTGGMGGQAEDPTSGMGGELPATM. The tract at residues 513–535 is disordered; the sequence is TGGMGGQAEDPTSGMGGELPATM. The 4; approximate repeat unit spans residues 522–532; that stretch reads DPTSGMGGELP.

This sequence belongs to the glycosyl hydrolase 14 family. In terms of assembly, monomer. In terms of tissue distribution, endosperm.

The enzyme catalyses Hydrolysis of (1-&gt;4)-alpha-D-glucosidic linkages in polysaccharides so as to remove successive maltose units from the non-reducing ends of the chains.. In terms of biological role, catalyzes the liberation of maltose from 1,4-alpha-D glucans. The sequence is that of Beta-amylase from Hordeum vulgare subsp. spontaneum (Wild barley).